The following is a 316-amino-acid chain: Melanocyte-stimulating hormone receptor (316 aa).

Topologically, residues 1–37 (MPMQGAQRKLLGSLNSTPTATSNLGLAANHTGAPCLE) are extracellular. An N-linked (GlcNAc...) asparagine glycan is attached at Asn29. Residues 38–63 (VSIPDGLFLSLGLVSLVENVLVVAAI) traverse the membrane as a helical segment. Over 64–72 (AKNRNLHSS) the chain is Cytoplasmic. Residues 73–93 (MYCFICCLALSDLLVSGSNML) form a helical membrane-spanning segment. Residues 94-118 (ETAVILLLETGALATRTSVVQQLHN) lie on the Extracellular side of the membrane. The chain crosses the membrane as a helical span at residues 119-140 (TINVLTCSSMLCSLCFLGAIAV). The Cytoplasmic segment spans residues 141–163 (DRYISIFYALRYHSIMTLPRAQR). The chain crosses the membrane as a helical span at residues 164-183 (AIAAIWVASVLSSTLFITYY). Residues 184-191 (DHAAVLLC) are Extracellular-facing. Residues 192 to 211 (LVVFFLAMLVLMAVLYVHML) form a helical membrane-spanning segment. Over 212 to 240 (ARACQHAHGIIRLHKRQTPAHQAFGLRGA) the chain is Cytoplasmic. A helical transmembrane segment spans residues 241–266 (ATLTILLGIFFLCWGPFFLHLTLVVF). Over 267–279 (CPQHLTCSCIFKN) the chain is Extracellular. A helical membrane pass occupies residues 280-300 (FKVFLTLIICNTIIDPLIYAF). Topologically, residues 301–316 (RSQELRRTLKEVLCSW) are cytoplasmic. The S-palmitoyl cysteine moiety is linked to residue Cys314.

It belongs to the G-protein coupled receptor 1 family. Interacts with MGRN1, but does not undergo MGRN1-mediated ubiquitination; this interaction competes with GNAS-binding and thus inhibits agonist-induced cAMP production. Interacts with OPN3; the interaction results in a decrease in MC1R-mediated cAMP signaling and ultimately a decrease in melanin production in melanocytes.

It localises to the cell membrane. In terms of biological role, receptor for MSH (alpha, beta and gamma) and ACTH. The activity of this receptor is mediated by G proteins which activate adenylate cyclase. Mediates melanogenesis, the production of eumelanin (black/brown) and phaeomelanin (red/yellow), via regulation of cAMP signaling in melanocytes. The polypeptide is Melanocyte-stimulating hormone receptor (MC1R) (Saguinus geoffroyi (Geoffroy's tamarin)).